The chain runs to 101 residues: Large ribosomal subunit protein uL23 (101 aa).

Belongs to the universal ribosomal protein uL23 family. As to quaternary structure, part of the 50S ribosomal subunit. Contacts protein L29, and trigger factor when it is bound to the ribosome.

Functionally, one of the early assembly proteins it binds 23S rRNA. One of the proteins that surrounds the polypeptide exit tunnel on the outside of the ribosome. Forms the main docking site for trigger factor binding to the ribosome. The polypeptide is Large ribosomal subunit protein uL23 (Leptospira biflexa serovar Patoc (strain Patoc 1 / Ames)).